Reading from the N-terminus, the 506-residue chain is Lysine--tRNA ligase (506 aa).

E416 and E423 together coordinate Mg(2+).

Belongs to the class-II aminoacyl-tRNA synthetase family. In terms of assembly, homodimer. Mg(2+) is required as a cofactor.

It localises to the cytoplasm. The catalysed reaction is tRNA(Lys) + L-lysine + ATP = L-lysyl-tRNA(Lys) + AMP + diphosphate. This Xylella fastidiosa (strain M23) protein is Lysine--tRNA ligase.